Here is a 538-residue protein sequence, read N- to C-terminus: Atos homolog protein B (538 aa).

The span at 1–18 (MRHVQAEPSPSSEPEAGP) shows a compositional bias: low complexity. 4 disordered regions span residues 1–103 (MRHV…GLLG), 153–185 (NTLHTRDWASPDPGGQGSLGESPGPAPPGQLHT), 197–300 (GGKS…VLDP), and 323–342 (SLRKGPGLLSPPSASPVPTP). Positions 227 to 238 (HTPPGPGPPGPC) are enriched in pro residues. Ser-254 and Ser-255 each carry phosphoserine. Over residues 323–334 (SLRKGPGLLSPP) the composition is skewed to low complexity. The tract at residues 348–430 (LLGSFEESLL…VPKVGTIQVT (83 aa)) is required for macropage invasion. Residues 436–444 (QTVVKMFLV) are transactivation domain 1 (TAD1).

It belongs to the ATOS family.

The protein localises to the nucleus. In terms of biological role, transcription regulator that may syncronize transcriptional and translational programs. The protein is Atos homolog protein B of Pongo abelii (Sumatran orangutan).